The chain runs to 156 residues: Putative pre-16S rRNA nuclease (156 aa).

Belongs to the YqgF nuclease family.

It localises to the cytoplasm. Functionally, could be a nuclease involved in processing of the 5'-end of pre-16S rRNA. This Caulobacter vibrioides (strain ATCC 19089 / CIP 103742 / CB 15) (Caulobacter crescentus) protein is Putative pre-16S rRNA nuclease.